A 249-amino-acid chain; its full sequence is Transmembrane protein 150C (249 aa).

The Cytoplasmic portion of the chain corresponds to 1–9 (MDGKKCSVW). Residues 10 to 30 (MFLPLVFTLFTSAGLWIVYFI) traverse the membrane as a helical segment. Topologically, residues 31-64 (AVEDDKILPLNSAERKPGVKHAPYISIAGDDPPA) are extracellular. Residues 65 to 85 (SCVFSQVMNMAAFLALVVAVL) form a helical membrane-spanning segment. Residues 86–97 (RFIQLKPKVLNP) are Cytoplasmic-facing. A helical transmembrane segment spans residues 98-118 (WLNISGLVALCLASFGMTLLG). The Extracellular segment spans residues 119-130 (NFQLTNDEEIHN). A helical membrane pass occupies residues 131–151 (VGTSLTFGFGTLTCWIQAALT). Residues 152-168 (LKVNIKNEGRRVGIPRV) are Cytoplasmic-facing. The chain crosses the membrane as a helical span at residues 169–189 (ILSASITLCVVLYFILMAQSI). Over 190–192 (HMY) the chain is Extracellular. A helical transmembrane segment spans residues 193 to 213 (AARVQWGLVMCFLSYFGTFAV). The Cytoplasmic portion of the chain corresponds to 214–249 (EFRHYRYEIVCSEYQENFLSFSESLSEASEYQTDQV).

Belongs to the DRAM/TMEM150 family.

The protein localises to the cell membrane. The protein resides in the lysosome membrane. It carries out the reaction Ca(2+)(in) = Ca(2+)(out). The catalysed reaction is Na(+)(in) = Na(+)(out). It catalyses the reaction K(+)(in) = K(+)(out). The enzyme catalyses Mg(2+)(in) = Mg(2+)(out). Functionally, nonselective cationic channel with high permeability to Ca(2+). Component of a mechanosensitive cation channel, confers mechanically activated (MA) currents with slow inactivation kinetics. May contribute to proprioception. The polypeptide is Transmembrane protein 150C (Homo sapiens (Human)).